A 203-amino-acid polypeptide reads, in one-letter code: Holliday junction branch migration complex subunit RuvA (203 aa).

The tract at residues 1 to 63 (MIVSLRGTVE…EESQTLYGFT (63 aa)) is domain I. The domain II stretch occupies residues 64–142 (DDASRRMFVL…GFNDGIPAAA (79 aa)). Residues 143 to 150 (QPQLSIAV) form a flexible linker region. A domain III region spans residues 150–203 (VDQAVQEQVLEALVGLGFSEKIALPVLSRVLRDSPELSKSQALRAALSELGTKN).

Belongs to the RuvA family. Homotetramer. Forms an RuvA(8)-RuvB(12)-Holliday junction (HJ) complex. HJ DNA is sandwiched between 2 RuvA tetramers; dsDNA enters through RuvA and exits via RuvB. An RuvB hexamer assembles on each DNA strand where it exits the tetramer. Each RuvB hexamer is contacted by two RuvA subunits (via domain III) on 2 adjacent RuvB subunits; this complex drives branch migration. In the full resolvosome a probable DNA-RuvA(4)-RuvB(12)-RuvC(2) complex forms which resolves the HJ.

The protein resides in the cytoplasm. Functionally, the RuvA-RuvB-RuvC complex processes Holliday junction (HJ) DNA during genetic recombination and DNA repair, while the RuvA-RuvB complex plays an important role in the rescue of blocked DNA replication forks via replication fork reversal (RFR). RuvA specifically binds to HJ cruciform DNA, conferring on it an open structure. The RuvB hexamer acts as an ATP-dependent pump, pulling dsDNA into and through the RuvAB complex. HJ branch migration allows RuvC to scan DNA until it finds its consensus sequence, where it cleaves and resolves the cruciform DNA. The sequence is that of Holliday junction branch migration complex subunit RuvA from Corynebacterium diphtheriae (strain ATCC 700971 / NCTC 13129 / Biotype gravis).